The sequence spans 127 residues: Glycine cleavage system H protein (127 aa).

The region spanning 22-104 (NVRIGITDYA…YDKAWMIVVK (83 aa)) is the Lipoyl-binding domain. N6-lipoyllysine is present on K63.

The protein belongs to the GcvH family. As to quaternary structure, the glycine cleavage system is composed of four proteins: P, T, L and H. Requires (R)-lipoate as cofactor.

Its function is as follows. The glycine cleavage system catalyzes the degradation of glycine. The H protein shuttles the methylamine group of glycine from the P protein to the T protein. In terms of biological role, is also involved in protein lipoylation via its role as an octanoyl/lipoyl carrier protein intermediate. The sequence is that of Glycine cleavage system H protein from Geobacillus kaustophilus (strain HTA426).